The primary structure comprises 112 residues: Large ribosomal subunit protein eL36y (112 aa).

The segment covering 79 to 88 (KLGTHKRAKR) has biased composition (basic residues). Residues 79 to 112 (KLGTHKRAKRKREEMSSVLRKMRSGGGGATEKKK) are disordered. The segment covering 102 to 112 (SGGGGATEKKK) has biased composition (gly residues).

The protein belongs to the eukaryotic ribosomal protein eL36 family.

This is Large ribosomal subunit protein eL36y (RPL36B) from Arabidopsis thaliana (Mouse-ear cress).